A 252-amino-acid chain; its full sequence is Homeobox protein EMX2 (252 aa).

The homeobox DNA-binding region spans 154–213 (PKRIRTAFSPSQLLRLEHAFEKNHYVVGAERKQLAHSLSLTETQVKVWFQNRRTKFKRQK). Residues 212–252 (QKLEEEGSDSQQKKKGTHHINRWRIATKQASPEEIDVTSDD) form a disordered region. Positions 224–233 (KKKGTHHINR) are enriched in basic residues.

This sequence belongs to the EMX homeobox family. As to quaternary structure, interacts with translation initiation factor EIF4E. In terms of tissue distribution, cerebral cortex.

Its subcellular location is the nucleus. The protein localises to the cell projection. The protein resides in the axon. Functionally, transcription factor, which in cooperation with EMX1, acts to generate the boundary between the roof and archipallium in the developing brain. May function in combination with OTX1/2 to specify cell fates in the developing central nervous system. In the inner ear, it controls the distribution of GPR156 at hair cell boundaries, and regulates the organization of stereociliary bundles in opposite orientations across the line of polarity reversal (LPR). The polypeptide is Homeobox protein EMX2 (EMX2) (Homo sapiens (Human)).